Reading from the N-terminus, the 564-residue chain is Eukaryotic translation initiation factor 3 subunit L (564 aa).

At S2 the chain carries N-acetylserine. The 207-residue stretch at 331-537 (DAIRVFANIL…IHIADTKVAR (207 aa)) folds into the PCI domain. Residues K465 and K549 each carry the N6-acetyllysine modification.

This sequence belongs to the eIF-3 subunit L family. In terms of assembly, component of the eukaryotic translation initiation factor 3 (eIF-3) complex, which is composed of 13 subunits: EIF3A, EIF3B, EIF3C, EIF3D, EIF3E, EIF3F, EIF3G, EIF3H, EIF3I, EIF3J, EIF3K, EIF3L and EIF3M. The eIF-3 complex appears to include 3 stable modules: module A is composed of EIF3A, EIF3B, EIF3G and EIF3I; module B is composed of EIF3F, EIF3H, and EIF3M; and module C is composed of EIF3C, EIF3D, EIF3E, EIF3K and EIF3L. EIF3C of module C binds EIF3B of module A and EIF3H of module B, thereby linking the three modules. EIF3J is a labile subunit that binds to the eIF-3 complex via EIF3B. The eIF-3 complex interacts with RPS6KB1 under conditions of nutrient depletion. Mitogenic stimulation leads to binding and activation of a complex composed of MTOR and RPTOR, leading to phosphorylation and release of RPS6KB1 and binding of EIF4B to eIF-3. Interacts with RRN3.

It localises to the cytoplasm. Its function is as follows. Component of the eukaryotic translation initiation factor 3 (eIF-3) complex, which is required for several steps in the initiation of protein synthesis. The eIF-3 complex associates with the 40S ribosome and facilitates the recruitment of eIF-1, eIF-1A, eIF-2:GTP:methionyl-tRNAi and eIF-5 to form the 43S pre-initiation complex (43S PIC). The eIF-3 complex stimulates mRNA recruitment to the 43S PIC and scanning of the mRNA for AUG recognition. The eIF-3 complex is also required for disassembly and recycling of post-termination ribosomal complexes and subsequently prevents premature joining of the 40S and 60S ribosomal subunits prior to initiation. The eIF-3 complex specifically targets and initiates translation of a subset of mRNAs involved in cell proliferation, including cell cycling, differentiation and apoptosis, and uses different modes of RNA stem-loop binding to exert either translational activation or repression. The polypeptide is Eukaryotic translation initiation factor 3 subunit L (Bos taurus (Bovine)).